The chain runs to 95 residues: Protein TusB (95 aa).

This sequence belongs to the DsrH/TusB family. In terms of assembly, heterohexamer, formed by a dimer of trimers. The hexameric TusBCD complex contains 2 copies each of TusB, TusC and TusD. The TusBCD complex interacts with TusE.

The protein resides in the cytoplasm. Its function is as follows. Part of a sulfur-relay system required for 2-thiolation of 5-methylaminomethyl-2-thiouridine (mnm(5)s(2)U) at tRNA wobble positions. This is Protein TusB from Enterobacter sp. (strain 638).